Consider the following 525-residue polypeptide: Cytochrome P450 monooxygenase ltmJ (525 aa).

The helical transmembrane segment at 21-43 (LTWWQTIVSFIIFCIMCSWLPGN) threads the bilayer. Asn-136 is a glycosylation site (N-linked (GlcNAc...) asparagine). Residue Cys-465 coordinates heme.

This sequence belongs to the cytochrome P450 family. Requires heme as cofactor.

It localises to the membrane. The protein operates within secondary metabolite biosynthesis. Functionally, cytochrome P450 monooxygenase; part of the gene clusters that mediates the biosynthesis of lolitrems, indole-diterpene mycotoxins that are potent tremorgens in mammals, and are synthesized by clavicipitaceous fungal endophytes in association with their grass hosts. The geranylgeranyl diphosphate (GGPP) synthase ltmG is proposed to catalyze the first step in lolitrem biosynthesis. LtmG catalyzes a series of iterative condensations of isopentenyl diphosphate (IPP) with dimethylallyl diphosphate (DMAPP), geranyl diphosphate (GPP), and farnesyl diphosphate (FPP), to form GGPP. GGPP then condenses with indole-3-glycerol phosphate to form 3-geranylgeranylindole, an acyclic intermediate, to be incorporated into paxilline. Either ltmG or ltmC could be responsible for this step, as both are putative prenyl transferases. The FAD-dependent monooxygenase ltmM then catalyzes the epoxidation of the two terminal alkenes of the geranylgeranyl moiety, which is subsequently cyclized by ltmB, to paspaline. The cytochrome P450 monooxygenases ltmQ and ltmP can sequentially oxidize paspaline to terpendole E and terpendole F. Alternatively, ltmP converts paspaline to an intermediate which is oxidized by ltmQ to terpendole F. LtmF, ltmK, ltmE and ltmJ appear to be unique to the epichloe endophytes. The prenyltransferase ltmF is involved in the 27-hydroxyl-O-prenylation. The cytochrome P450 monooxygenase ltmK is required for the oxidative acetal ring formation. The multi-functional prenyltransferase ltmE is required for C20- and C21-prenylations of the indole ring of paspalanes and acts together with the cytochrome P450 monooxygenase ltmJ to yield lolitremanes by multiple oxidations and ring closures. The stereoisomer pairs of lolitriol and lolitrem N or lolitrem B and lolitrem F may be attributed to variations in the way in which ring closure can occur under the action of ltmJ. While the major product of this pathway is lolitrem B, the prenyl transferases and cytochrome P450 monooxygenases identified in this pathway have a remarkable versatility in their regio- and stereo-specificities to generate a diverse range of metabolites that are products of a metabolic grid rather than a linear pathway. This is Cytochrome P450 monooxygenase ltmJ (ltmJ) from Epichloe festucae var. lolii (Neotyphodium lolii).